Here is a 584-residue protein sequence, read N- to C-terminus: Transcriptional regulator STP2 (584 aa).

Composition is skewed to polar residues over residues 1–11 (MSVAITSNNNK) and 180–202 (AESNESNESLAKDSSTTPASISD). 2 disordered regions span residues 1–22 (MSVAITSNNNKQPQPQPQPHLK) and 161–214 (KMHP…STVS). Over residues 203–214 (SPSHSETESTVS) the composition is skewed to low complexity. A C2H2-type zinc finger spans residues 225-247 (FKCPSCDAEFRVRGYLTRHMKKH). Disordered stretches follow at residues 381–496 (RQKK…PQQP) and 553–584 (QYQPGQQQQQQQQQQQQQQQRQHQQQQPSMYF). Over residues 394–407 (SESSIQSQESESSI) the composition is skewed to low complexity. Basic residues predominate over residues 431 to 441 (QHQHQHHHHVQ). A compositionally biased stretch (low complexity) spans 442–480 (NQHQQHVNQQQSIATPASIYSSSASSTSSYESTHSPYTP). Residues 481 to 496 (QSSRSPLSHMYNPQQP) show a composition bias toward polar residues.

Post-translationally, proteolytically cleaved: activated by the amino acid-induced proteolytic removal of an N-terminal inhibitory domain.

The protein resides in the cell membrane. It localises to the nucleus. In terms of biological role, transcription factor involved in the regulation of gene expression in response to extracellular amino acid levels. Synthesized as latent cytoplasmic precursor, which, upon a signal initiated by the plasma membrane SPS amino acid sensor system (including CSY1 and CSH3), becomes proteolytically activated and relocates to the nucleus, where it induces the expression of SPS-sensor-regulated genes. Required for efficient alkalinization through the release of ammonia from the cells produced during the breakdown of amino acids, and subsequent switch to the hyphal form. This chain is Transcriptional regulator STP2 (STP2), found in Candida albicans (strain SC5314 / ATCC MYA-2876) (Yeast).